We begin with the raw amino-acid sequence, 291 residues long: Protein/nucleic acid deglycase HchA (291 aa).

Residues 1 to 18 (MSNERDTSRTPTPDHAEH) show a composition bias toward basic and acidic residues. The segment at 1 to 20 (MSNERDTSRTPTPDHAEHNA) is disordered. C188 serves as the catalytic Nucleophile.

Belongs to the peptidase C56 family. HchA subfamily.

It localises to the cytoplasm. The catalysed reaction is N(omega)-(1-hydroxy-2-oxopropyl)-L-arginyl-[protein] + H2O = lactate + L-arginyl-[protein] + H(+). The enzyme catalyses N(6)-(1-hydroxy-2-oxopropyl)-L-lysyl-[protein] + H2O = lactate + L-lysyl-[protein] + H(+). It catalyses the reaction S-(1-hydroxy-2-oxopropyl)-L-cysteinyl-[protein] + H2O = lactate + L-cysteinyl-[protein] + H(+). It carries out the reaction N(omega)-(1-hydroxy-2-oxoethyl)-L-arginyl-[protein] + H2O = L-arginyl-[protein] + glycolate + H(+). The catalysed reaction is N(6)-(1-hydroxy-2-oxoethyl)-L-lysyl-[protein] + H2O = glycolate + L-lysyl-[protein] + H(+). The enzyme catalyses S-(1-hydroxy-2-oxoethyl)-L-cysteinyl-[protein] + H2O = glycolate + L-cysteinyl-[protein] + H(+). It catalyses the reaction N(2)-(1-hydroxy-2-oxopropyl)-dGTP + H2O = lactate + dGTP + H(+). It carries out the reaction N(2)-(1-hydroxy-2-oxopropyl)-GTP + H2O = lactate + GTP + H(+). The catalysed reaction is N(2)-(1-hydroxy-2-oxopropyl)-GDP + H2O = lactate + GDP + H(+). The enzyme catalyses N(2)-(1-hydroxy-2-oxopropyl)-GMP + H2O = lactate + GMP + H(+). It catalyses the reaction N(2)-(1-hydroxy-2-oxoethyl)-dGTP + H2O = dGTP + glycolate + H(+). It carries out the reaction N(2)-(1-hydroxy-2-oxoethyl)-GTP + H2O = glycolate + GTP + H(+). The catalysed reaction is N(2)-(1-hydroxy-2-oxoethyl)-GDP + H2O = glycolate + GDP + H(+). The enzyme catalyses N(2)-(1-hydroxy-2-oxoethyl)-GMP + H2O = glycolate + GMP + H(+). It catalyses the reaction an N(2)-(1-hydroxy-2-oxopropyl)-guanosine in RNA + H2O = a guanosine in RNA + lactate + H(+). It carries out the reaction an N(2)-(1-hydroxy-2-oxopropyl)-2'-deoxyguanosine in DNA + H2O = a 2'-deoxyguanosine in DNA + lactate + H(+). The catalysed reaction is an N(2)-(1-hydroxy-2-oxoethyl)-guanosine in RNA + H2O = a guanosine in RNA + glycolate + H(+). The enzyme catalyses an N(2)-(1-hydroxy-2-oxoethyl)-2'-deoxyguanosine in DNA + H2O = a 2'-deoxyguanosine in DNA + glycolate + H(+). In terms of biological role, protein and nucleotide deglycase that catalyzes the deglycation of the Maillard adducts formed between amino groups of proteins or nucleotides and reactive carbonyl groups of glyoxals. Thus, functions as a protein deglycase that repairs methylglyoxal- and glyoxal-glycated proteins, and releases repaired proteins and lactate or glycolate, respectively. Deglycates cysteine, arginine and lysine residues in proteins, and thus reactivates these proteins by reversing glycation by glyoxals. Acts on early glycation intermediates (hemithioacetals and aminocarbinols), preventing the formation of Schiff bases and advanced glycation endproducts (AGE). Also functions as a nucleotide deglycase able to repair glycated guanine in the free nucleotide pool (GTP, GDP, GMP, dGTP) and in DNA and RNA. Is thus involved in a major nucleotide repair system named guanine glycation repair (GG repair), dedicated to reversing methylglyoxal and glyoxal damage via nucleotide sanitization and direct nucleic acid repair. Plays an important role in protecting cells from carbonyl stress. In Pseudomonas aeruginosa (strain LESB58), this protein is Protein/nucleic acid deglycase HchA.